Here is a 304-residue protein sequence, read N- to C-terminus: Acetaldehyde dehydrogenase 2 (304 aa).

Catalysis depends on Cys-131, which acts as the Acyl-thioester intermediate. NAD(+)-binding positions include 162 to 170 (SAGPGTRKN) and Asn-273.

Belongs to the acetaldehyde dehydrogenase family.

The enzyme catalyses acetaldehyde + NAD(+) + CoA = acetyl-CoA + NADH + H(+). In Dechloromonas aromatica (strain RCB), this protein is Acetaldehyde dehydrogenase 2.